The primary structure comprises 634 residues: MSTSSHSGDCTAVPSNSNGTIILSAIGVVFGDIGTSPLYTLKEAFSPNYGLTPNHDTVLGILSLIFWAMMLVVTIKYVAVIMRVDNDGEGGIMALTALTQRTMPFGSRSIYIVGILGIFGTSLFFGDGVITPAISVLSAVEGLEVAEPHMKAFVVPITLAVLILLFLCQRFGTERVGKTFGPITLLWFIAIGVVGVYNIAQAPEVLHAINPSWGLHFFLEHGWHSMFVLGAVVLAVTGGEALYADMGHFGAKAIRHAWMYVVLPMLALNYLGQGALVLSNPTAIGNPFYQSIPDWGLYPMIALATAAAVIASQALITGSYSLSSQAMQLGYIPRMNVRHTSQSTIGQIYVPTVNWTLLTLVILTVIGFGDSTSMASAYGVAVTGTMMITTVLMIIYARANPRVPRLMLWMMAIVFIAVDGAFFYANIIKFMDGAWFPLLLGVVIFTFMRTWLRGRKLLHEEMRKDGINLDNFLPGLMLAPPVKVPGTAVFLTADSTVVPHALMHNLKHNKVLHERNVFLTVKTLKIPYAANSERLKIEPISNGFYRVHIRFGFMETPDVPSALMCSKDHAGIDFDPMHTTFFVSRETVIPSANRGMPIWRDKLFVLMHRNAAPANAFFRIPGNRLVELGAQVEI.

12 helical membrane-spanning segments follow: residues 21–41, 61–81, 110–130, 148–168, 180–200, 217–237, 258–278, 296–316, 348–368, 377–397, 408–428, and 432–452; these read IILS…LYTL, ILSL…VAVI, IYIV…DGVI, PHMK…LFLC, FGPI…YNIA, FFLE…LAVT, WMYV…ALVL, GLYP…QALI, IYVP…VIGF, AYGV…IIYA, LWMM…ANII, and DGAW…RTWL.

This sequence belongs to the HAK/KUP transporter (TC 2.A.72) family.

It localises to the cell inner membrane. It catalyses the reaction K(+)(in) + H(+)(in) = K(+)(out) + H(+)(out). In terms of biological role, transport of potassium into the cell. Likely operates as a K(+):H(+) symporter. The sequence is that of Probable potassium transport system protein Kup from Xylella fastidiosa (strain 9a5c).